The sequence spans 89 residues: Co-chaperonin GroES (89 aa).

Belongs to the GroES chaperonin family. Heptamer of 7 subunits arranged in a ring. Interacts with the chaperonin GroEL.

Its subcellular location is the cytoplasm. In terms of biological role, together with the chaperonin GroEL, plays an essential role in assisting protein folding. The GroEL-GroES system forms a nano-cage that allows encapsulation of the non-native substrate proteins and provides a physical environment optimized to promote and accelerate protein folding. GroES binds to the apical surface of the GroEL ring, thereby capping the opening of the GroEL channel. This chain is Co-chaperonin GroES, found in Porphyromonas gingivalis (strain ATCC 33277 / DSM 20709 / CIP 103683 / JCM 12257 / NCTC 11834 / 2561).